The chain runs to 165 residues: Phosphopantetheine adenylyltransferase (165 aa).

Ser10 is a substrate binding site. ATP is bound by residues 10–11 (SF) and His18. Substrate-binding residues include Lys42, Leu74, and Arg88. ATP-binding positions include 89 to 91 (GLR), Glu99, and 124 to 130 (YSFLSSS).

This sequence belongs to the bacterial CoaD family. In terms of assembly, homohexamer. Mg(2+) is required as a cofactor.

The protein localises to the cytoplasm. The catalysed reaction is (R)-4'-phosphopantetheine + ATP + H(+) = 3'-dephospho-CoA + diphosphate. Its pathway is cofactor biosynthesis; coenzyme A biosynthesis; CoA from (R)-pantothenate: step 4/5. Reversibly transfers an adenylyl group from ATP to 4'-phosphopantetheine, yielding dephospho-CoA (dPCoA) and pyrophosphate. The protein is Phosphopantetheine adenylyltransferase of Anoxybacillus flavithermus (strain DSM 21510 / WK1).